Here is an 87-residue protein sequence, read N- to C-terminus: Pyocin-S1 immunity protein (87 aa).

This sequence belongs to the colicins ColE2/ColE8/ColE9 and pyocins S1/S2 family.

The protein is Pyocin-S1 immunity protein (imm1) of Pseudomonas aeruginosa.